The following is a 464-amino-acid chain: Glycine receptor subunit alpha-3 (464 aa).

The signal sequence occupies residues 1 to 33 (MAHVRHFRTLVSGFYFWEAALLLSLVATKETNS). Over 34-255 (ARSRSAPMSP…RFHLERQMGY (222 aa)) the chain is Extracellular. Asparagine 71 carries an N-linked (GlcNAc...) asparagine glycan. A disulfide bridge connects residues cysteine 171 and cysteine 185. Residues glutamate 225 and aspartate 227 each contribute to the Zn(2+) site. An intrachain disulfide couples cysteine 231 to cysteine 242. 235-240 (YNTGKF) contacts strychnine. Histidine 248 provides a ligand contact to Zn(2+). Residues 256-277 (YLIQMYIPSLLIVILSWVSFWI) form a helical membrane-spanning segment. Residues 278–282 (NMDAA) lie on the Cytoplasmic side of the membrane. A helical transmembrane segment spans residues 283-303 (PARVALGITTVLTMTTQSSGS). At 304–314 (RASLPKVSYVK) the chain is on the extracellular side. Residues 315-335 (AIDIWMAVCLLFVFSALLEYA) traverse the membrane as a helical segment. The Cytoplasmic portion of the chain corresponds to 336–430 (AVNFVSRQHK…FIDRAKKIDT (95 aa)). Serine 370 is modified (phosphoserine). Serine 379 carries the phosphoserine; by PKA modification. Residues 431–451 (ISRACFPLAFLIFNIFYWVIY) form a helical membrane-spanning segment. Over 452–464 (KILRHEDIHQQQD) the chain is Extracellular.

This sequence belongs to the ligand-gated ion channel (TC 1.A.9) family. Glycine receptor (TC 1.A.9.3) subfamily. GLRA3 sub-subfamily. As to quaternary structure, homopentamer (in vitro). Heteropentamer composed of GLRA3 and GLRB. Both homopentamers and heteropentamers form functional ion channels, but their characteristics are subtly different. In terms of processing, phosphorylated by PKA; this causes down-regulation of channel activity. Dephosphorylated in response to activation of HTR1A signaling; this increases channel activity. As to expression, detected in brainstem, also in neurons that control rhythmic breathing. Detected in superficial laminae of the dorsal horn of the thoracic spinal cord. Detected in dentate gyrus in hippocampus, especially in stratum granulare. Detected in the inner plexiform layer in the retina (at protein level). Detected in midbrain, thalamus, brain cortex, hippocampus, and at lower levels in cerebellum.

It localises to the postsynaptic cell membrane. The protein localises to the synapse. The protein resides in the perikaryon. Its subcellular location is the cell projection. It is found in the dendrite. It localises to the cell membrane. The catalysed reaction is chloride(in) = chloride(out). Its activity is regulated as follows. Inhibited by prostaglandin E2, probably via PKA-mediated phosphorylation at Ser-379. In terms of biological role, glycine receptors are ligand-gated chloride channels. Channel opening is triggered by extracellular glycine. Channel characteristics depend on the subunit composition; heteropentameric channels display faster channel closure. Plays an important role in the down-regulation of neuronal excitability. Contributes to the generation of inhibitory postsynaptic currents. Contributes to increased pain perception in response to increased prostaglandin E2 levels. Plays a role in the regulation of breathing rhythm, especially of the duration of the postinspiratory phase. Plays a role in cellular responses to ethanol. The protein is Glycine receptor subunit alpha-3 (Glra3) of Mus musculus (Mouse).